Consider the following 152-residue polypeptide: MDNKLSSENNQLSSEKILGLLPHRYPFALVDKVIENIPGERAVAVKNVTINEPQFQGHFPERPLMPGVLIVESMAQVGGIIVTQMPDLPKGLFVFAGINNVKFRKPVLPGDQLIITCDLLSIKRQRFGKVKGEAHVDGNLVCAGELMFSLVD.

H58 is an active-site residue.

The protein belongs to the thioester dehydratase family. FabZ subfamily.

It localises to the cytoplasm. It carries out the reaction a (3R)-hydroxyacyl-[ACP] = a (2E)-enoyl-[ACP] + H2O. In terms of biological role, involved in unsaturated fatty acids biosynthesis. Catalyzes the dehydration of short chain beta-hydroxyacyl-ACPs and long chain saturated and unsaturated beta-hydroxyacyl-ACPs. The chain is 3-hydroxyacyl-[acyl-carrier-protein] dehydratase FabZ from Prochlorococcus marinus (strain MIT 9312).